A 114-amino-acid chain; its full sequence is PDZK1-interacting protein 1 (114 aa).

The Extracellular portion of the chain corresponds to 1–28 (MSVLSLVVLSLLMALPPASCQQGRGNLQ). A helical membrane pass occupies residues 29–51 (PWMQGLIAVAVFLVLVAIAFAVN). At 52-114 (HFWCQEKPAP…EEGKVCSTPM (63 aa)) the chain is on the cytoplasmic side. Ser-85 is modified (phosphoserine).

This sequence belongs to the PDZK1-interacting protein 1/SMIM24 family. Forms a heterodimer (via N-terminal transmembrane helix) with SLC5A2/SGLT2 (via TM13); this interaction enhances SLC5A2 transporter activity. Interacts with PDZK1.

The protein resides in the apical cell membrane. In terms of biological role, auxiliary protein of electrogenic Na(+)-coupled sugar symporter SLC5A2/SGLT2 and SLC5A1/SGLT1. Essential for the transporter activity of SLC5A2/SGLT2 but not SLC5A1/SGLT1. This Bos taurus (Bovine) protein is PDZK1-interacting protein 1.